Consider the following 117-residue polypeptide: Ig heavy chain V region 1-62-3 (117 aa).

The signal sequence occupies residues M1–F19. The tract at residues Q20–T49 is framework-1. Positions S50–H54 are complementarity-determining-1. Residues W55–G68 form a framework-2 region. The complementarity-determining-2 stretch occupies residues R69 to S85. The framework-3 stretch occupies residues K86–R117.

This is Ig heavy chain V region 1-62-3 (Ighv1-62-3) from Mus musculus (Mouse).